The following is a 364-amino-acid chain: DNA replication and repair protein RecF (364 aa).

30 to 37 (GENGSGKT) is an ATP binding site.

Belongs to the RecF family.

It localises to the cytoplasm. Its function is as follows. The RecF protein is involved in DNA metabolism; it is required for DNA replication and normal SOS inducibility. RecF binds preferentially to single-stranded, linear DNA. It also seems to bind ATP. This chain is DNA replication and repair protein RecF, found in Xylella fastidiosa (strain M23).